Here is a 672-residue protein sequence, read N- to C-terminus: UvrABC system protein B (672 aa).

Residues 26-181 form the Helicase ATP-binding domain; the sequence is AGLEDGLAYQ…ILQRLAELQY (156 aa). ATP is bound at residue 39-46; the sequence is GVTGSGKT. The Beta-hairpin motif lies at 92-115; the sequence is YYDYYQPEAYVPSSDTYIEKDASI. Residues 430–592 enclose the Helicase C-terminal domain; the sequence is QVDDLLSEIK…ITPKSIQKAV (163 aa). Residues 631–666 form the UVR domain; it reads AKELRKLEEQMYHHARNLEFEEAAAVRDKIQHIRKG.

The protein belongs to the UvrB family. As to quaternary structure, forms a heterotetramer with UvrA during the search for lesions. Interacts with UvrC in an incision complex.

Its subcellular location is the cytoplasm. Its function is as follows. The UvrABC repair system catalyzes the recognition and processing of DNA lesions. A damage recognition complex composed of 2 UvrA and 2 UvrB subunits scans DNA for abnormalities. Upon binding of the UvrA(2)B(2) complex to a putative damaged site, the DNA wraps around one UvrB monomer. DNA wrap is dependent on ATP binding by UvrB and probably causes local melting of the DNA helix, facilitating insertion of UvrB beta-hairpin between the DNA strands. Then UvrB probes one DNA strand for the presence of a lesion. If a lesion is found the UvrA subunits dissociate and the UvrB-DNA preincision complex is formed. This complex is subsequently bound by UvrC and the second UvrB is released. If no lesion is found, the DNA wraps around the other UvrB subunit that will check the other stand for damage. The polypeptide is UvrABC system protein B (Coxiella burnetii (strain CbuG_Q212) (Coxiella burnetii (strain Q212))).